A 327-amino-acid polypeptide reads, in one-letter code: F-box/LRR-repeat protein At3g58900 (327 aa).

The 47-residue stretch at Met-1–Asp-47 folds into the F-box domain. 5 LRR repeats span residues Asp-116–Ser-144, Lys-161–Asn-192, Asn-199–Ala-230, Tyr-235–Leu-261, and Glu-277–Pro-308.

The chain is F-box/LRR-repeat protein At3g58900 from Arabidopsis thaliana (Mouse-ear cress).